We begin with the raw amino-acid sequence, 642 residues long: 2-oxoacid:ferredoxin oxidoreductase 2, subunit alpha (642 aa).

The YPITP motif signature appears at 263-267 (YPITP). 2 residues coordinate substrate: T266 and R356.

Heterodimer composed of an alpha and a beta subunit.

The catalysed reaction is a 2-oxocarboxylate + 2 oxidized [2Fe-2S]-[ferredoxin] + CoA = an acyl-CoA + 2 reduced [2Fe-2S]-[ferredoxin] + CO2 + H(+). Catalyzes the coenzyme A-dependent oxidative decarboxylation of different 2-oxoacids such as pyruvate, 2-oxobutyrate, glyoxylate and 2-oxoglutarate to form their CoA derivatives. The chain is 2-oxoacid:ferredoxin oxidoreductase 2, subunit alpha from Aeropyrum pernix (strain ATCC 700893 / DSM 11879 / JCM 9820 / NBRC 100138 / K1).